Consider the following 218-residue polypeptide: MATLTPRQQQIFDLIRNTIRNTGFPPTRAEIAAEFGFSSPNAAEEHLRALARKGVIELTPGASRGIRLKVARSDSEMPDQFSLPVSGIMQLTLPLVGRVAAGSPILAAEHIDRQYQVDASVFDERPDYLLRVRGLSMRDAGILDGDLLAVRKASEAPNGKIVVARLGDDVTVKRLQRRDGAIELIAENPDFPNIMVTPGREEFSLEGIAVGLIRSSGF.

The H-T-H motif DNA-binding region spans 28–48; that stretch reads RAEIAAEFGFSSPNAAEEHLR. Residues serine 136 and lysine 173 each act as for autocatalytic cleavage activity in the active site.

The protein belongs to the peptidase S24 family. As to quaternary structure, homodimer.

It catalyses the reaction Hydrolysis of Ala-|-Gly bond in repressor LexA.. In terms of biological role, represses a number of genes involved in the response to DNA damage (SOS response), including recA and lexA. In the presence of single-stranded DNA, RecA interacts with LexA causing an autocatalytic cleavage which disrupts the DNA-binding part of LexA, leading to derepression of the SOS regulon and eventually DNA repair. The polypeptide is LexA repressor (Cupriavidus pinatubonensis (strain JMP 134 / LMG 1197) (Cupriavidus necator (strain JMP 134))).